The following is a 362-amino-acid chain: Probable dual-specificity RNA methyltransferase RlmN (362 aa).

Glu-91 serves as the catalytic Proton acceptor. Residues 97-329 form the Radical SAM core domain; sequence QHYGLSVCVT…KKNGVNCVVR (233 aa). Cys-104 and Cys-340 are disulfide-bonded. The [4Fe-4S] cluster site is built by Cys-111, Cys-115, and Cys-118. S-adenosyl-L-methionine contacts are provided by residues 163-164, Ser-195, 218-220, and Asn-296; these read GE and SLH. The S-methylcysteine intermediate role is filled by Cys-340.

This sequence belongs to the radical SAM superfamily. RlmN family. It depends on [4Fe-4S] cluster as a cofactor.

Its subcellular location is the cytoplasm. The enzyme catalyses adenosine(2503) in 23S rRNA + 2 reduced [2Fe-2S]-[ferredoxin] + 2 S-adenosyl-L-methionine = 2-methyladenosine(2503) in 23S rRNA + 5'-deoxyadenosine + L-methionine + 2 oxidized [2Fe-2S]-[ferredoxin] + S-adenosyl-L-homocysteine. The catalysed reaction is adenosine(37) in tRNA + 2 reduced [2Fe-2S]-[ferredoxin] + 2 S-adenosyl-L-methionine = 2-methyladenosine(37) in tRNA + 5'-deoxyadenosine + L-methionine + 2 oxidized [2Fe-2S]-[ferredoxin] + S-adenosyl-L-homocysteine. Functionally, specifically methylates position 2 of adenine 2503 in 23S rRNA and position 2 of adenine 37 in tRNAs. This chain is Probable dual-specificity RNA methyltransferase RlmN, found in Streptococcus gordonii (strain Challis / ATCC 35105 / BCRC 15272 / CH1 / DL1 / V288).